The primary structure comprises 345 residues: Phosphoribosylformylglycinamidine cyclo-ligase (345 aa).

Belongs to the AIR synthase family.

It localises to the cytoplasm. The catalysed reaction is 2-formamido-N(1)-(5-O-phospho-beta-D-ribosyl)acetamidine + ATP = 5-amino-1-(5-phospho-beta-D-ribosyl)imidazole + ADP + phosphate + H(+). Its pathway is purine metabolism; IMP biosynthesis via de novo pathway; 5-amino-1-(5-phospho-D-ribosyl)imidazole from N(2)-formyl-N(1)-(5-phospho-D-ribosyl)glycinamide: step 2/2. This is Phosphoribosylformylglycinamidine cyclo-ligase from Shigella dysenteriae serotype 1 (strain Sd197).